We begin with the raw amino-acid sequence, 717 residues long: Polyribonucleotide nucleotidyltransferase (717 aa).

2 residues coordinate Mg(2+): Asp496 and Asp502. One can recognise a KH domain in the interval 563 to 622; the sequence is PRLLSFKIDPEMIGLVIGPGGKTIKGITEETGVKIDIDDDGTVTIAAADGEKAKQACNII. The S1 motif domain maps to 632 to 700; sequence GDVYVGRVTR…SKGRVNLTRL (69 aa).

Belongs to the polyribonucleotide nucleotidyltransferase family. Requires Mg(2+) as cofactor.

It is found in the cytoplasm. The enzyme catalyses RNA(n+1) + phosphate = RNA(n) + a ribonucleoside 5'-diphosphate. Functionally, involved in mRNA degradation. Catalyzes the phosphorolysis of single-stranded polyribonucleotides processively in the 3'- to 5'-direction. This Trichodesmium erythraeum (strain IMS101) protein is Polyribonucleotide nucleotidyltransferase.